Consider the following 124-residue polypeptide: Secreted RxLR effector protein 49 (124 aa).

The first 22 residues, 1-22 (MIRRSPLVAVILFVAITHVVLA), serve as a signal peptide directing secretion. A RxLR motif is present at residues 57–60 (RSLR).

The protein belongs to the RxLR effector family.

Its subcellular location is the secreted. It is found in the host cytoplasm. The protein localises to the host nucleus. Effector that acts as a broad suppressor of cell death to interrupt plant immunity. Inhibits cell death induced by cell death-inducing proteins, including the PAMP elicitor INF1 from P.infestans. In Plasmopara viticola (Downy mildew of grapevine), this protein is Secreted RxLR effector protein 49.